The following is a 218-amino-acid chain: Protein N-lysine methyltransferase METTL21A (218 aa).

Residues tryptophan 47, 73-75, aspartate 94, tryptophan 125, and alanine 143 contribute to the S-adenosyl-L-methionine site; that span reads GAG.

Belongs to the methyltransferase superfamily. METTL21 family. Interacts with heat shock 70 family members; at least some of these proteins are methylation substrates.

It localises to the cytoplasm. It carries out the reaction L-lysyl-[protein] + 3 S-adenosyl-L-methionine = N(6),N(6),N(6)-trimethyl-L-lysyl-[protein] + 3 S-adenosyl-L-homocysteine + 3 H(+). In terms of biological role, protein-lysine methyltransferase that selectively trimethylates residues in heat shock protein 70 (HSP70) family members. Contributes to the in vivo trimethylation of Lys residues in HSPA1 and HSPA8. In vitro methylates 'Lys-561' in HSPA1, 'Lys-564' in HSPA2, 'Lys-585' in HSPA5, 'Lys-563' in HSPA6 and 'Lys-561' in HSPA8. The sequence is that of Protein N-lysine methyltransferase METTL21A (Mettl21A) from Mus musculus (Mouse).